The following is a 905-amino-acid chain: Protein translocase subunit SecA (905 aa).

ATP-binding positions include Q87, G105–T109, and D512. The segment at D836–L905 is disordered. Over residues D841 to Q858 the composition is skewed to basic and acidic residues. Zn(2+) contacts are provided by C890, C892, C901, and H902. Basic residues predominate over residues K896 to L905.

Belongs to the SecA family. In terms of assembly, monomer and homodimer. Part of the essential Sec protein translocation apparatus which comprises SecA, SecYEG and auxiliary proteins SecDF-YajC and YidC. Zn(2+) serves as cofactor.

The protein resides in the cell inner membrane. It is found in the cytoplasm. The catalysed reaction is ATP + H2O + cellular proteinSide 1 = ADP + phosphate + cellular proteinSide 2.. Part of the Sec protein translocase complex. Interacts with the SecYEG preprotein conducting channel. Has a central role in coupling the hydrolysis of ATP to the transfer of proteins into and across the cell membrane, serving both as a receptor for the preprotein-SecB complex and as an ATP-driven molecular motor driving the stepwise translocation of polypeptide chains across the membrane. In Idiomarina loihiensis (strain ATCC BAA-735 / DSM 15497 / L2-TR), this protein is Protein translocase subunit SecA.